We begin with the raw amino-acid sequence, 859 residues long: MYSGAGPALAPPAPPPPIQGYAFKPPPRPDFGTSGRTIKLQANFFEMDIPKIDIYHYELDIKPEKCPRRVNREIVEHMVQHFKTQIFGDRKPVFDGRKNLYTAMPLPIGRDKVELEVTLPGEGKDRIFKVSIKWVSCVSLQALHDALSGRLPSVPFETIQALDVVMRHLPSMRYTPVGRSFFTASEGCSNPLGGGREVWFGFHQSVRPSLWKMMLNIDVSATAFYKAQPVIEFVCEVLDFKSIEEQQKPLTDSQRVKFTKEIKGLKVEITHCGQMKRKYRVCNVTRRPASHQTFPLQQESGQTVECTVAQYFKDRHKLVLRYPHLPCLQVGQEQKHTYLPLEVCNIVAGQRCIKKLTDNQTSTMIRATARSAPDRQEEISKLMRSASFNTDPYVREFGIMVKDEMTDVTGRVLQPPSILYGGRNKAIATPVQGVWDMRNKQFHTGIEIKVWAIACFAPQRQCTEVHLKSFTEQLRKISRDAGMPIQGQPCFCKYAQGADSVEPMFRHLKNTYAGLQLVVVILPGKTPVYAEVKRVGDTVLGMATQCVQMKNVQRTTPQTLSNLCLKINVKLGGVNNILLPQGRPPVFQQPVIFLGADVTHPPAGDGKKPSIAAVVGSMDAHPNRYCATVRVQQHRQEIIQDLAAMVRELLIQFYKSTRFKPTRIIFYRDGVSEGQFQQVLHHELLAIREACIKLEKDYQPGITFIVVQKRHHTRLFCTDKNERVGKSGNIPAGTTVDTKITHPTEFDFYLCSHAGIQGTSRPSHYHVLWDDNRFSSDELQILTYQLCHTYVRCTRSVSIPAPAYYAHLVAFRARYHLVDKEHDSAEGSHTSGQSNGRDHQALAKAVQVHQDTLRTMYFA.

The tract at residues 1–27 is disordered; that stretch reads MYSGAGPALAPPAPPPPIQGYAFKPPP. Y2 is subject to 3'-nitrotyrosine. The segment covering 9 to 27 has biased composition (pro residues); that stretch reads LAPPAPPPPIQGYAFKPPP. The 120-residue stretch at 229-348 folds into the PAZ domain; sequence PVIEFVCEVL…LPLEVCNIVA (120 aa). An interaction with guide RNA region spans residues 311–316; that stretch reads YFKDRH. The residue at position 387 (S387) is a Phosphoserine. In terms of domain architecture, Piwi spans 517–818; the sequence is LVVVILPGKT…VAFRARYHLV (302 aa). The interval 524-566 is interaction with guide RNA; the sequence is GKTPVYAEVKRVGDTVLGMATQCVQMKNVQRTTPQTLSNLCLK. The tract at residues 587 to 590 is interaction with GW182 family members; sequence FQQP. D597 contributes to the a divalent metal cation binding site. Residues 650 to 660 are interaction with GW182 family members; the sequence is LIQFYKSTRFK. D669 provides a ligand contact to a divalent metal cation. 4-hydroxyproline is present on P700. 3 interaction with guide RNA regions span residues 709–710, 753–761, and 790–812; these read KR, HAGIQGTSR, and YVRC…VAFR. Position 807 (H807) interacts with a divalent metal cation. Phosphoserine is present on residues S824, S828, S831, and S834.

This sequence belongs to the argonaute family. Ago subfamily. As to quaternary structure, interacts with DICER1 through its Piwi domain and with TARBP2 during assembly of the RNA-induced silencing complex (RISC). Together, DICER1, AGO2 and TARBP2 constitute the trimeric RISC loading complex (RLC), or micro-RNA (miRNA) loading complex (miRLC). Within the RLC/miRLC, DICER1 and TARBP2 are required to process precursor miRNAs (pre-miRNAs) to mature miRNAs and then load them onto AGO2. AGO2 bound to the mature miRNA constitutes the minimal RISC and may subsequently dissociate from DICER1 and TARBP2. Note however that the term RISC has also been used to describe the trimeric RLC/miRLC. The formation of RISC complexes containing siRNAs rather than miRNAs appears to occur independently of DICER1. Interacts with AGO1. Also interacts with DDB1, DDX5, DDX6, DDX20, DHX30, DHX36, DDX47, DHX9, ELAVL, FXR1, GEMIN4, HNRNPF, IGF2BP1, ILF3, IMP8, MATR3, PABPC1, PRMT5, P4HA1, P4HB, RBM4, SART3, TNRC6A, TNRC6B, UPF1 and YBX1. Interacts with the P-body components DCP1A and XRN1. Associates with polysomes and messenger ribonucleoproteins (mNRPs). Interacts with RBM4; the interaction is modulated under stress-induced conditions, occurs under both cell proliferation and differentiation conditions and in an RNA- and phosphorylation-independent manner. Interacts with LIMD1, WTIP and AJUBA. Interacts with TRIM71; the interaction increases in presence of RNA. Interacts with APOBEC3G in an RNA-dependent manner. Interacts with APOBEC3A, APOBEC3C, APOBEC3F and APOBEC3H. Interacts with DICER1, TARBP2, EIF6, MOV10 and RPL7A (60S ribosome subunit); they form a large RNA-induced silencing complex (RISC). Interacts with FMR1. Interacts with ZFP36. Found in a complex, composed of AGO2, CHD7 and ARB2A. Interacts with RC3H1; the interaction is RNA independent. Interacts with SND1. Interacts with SYT11. Interacts with CLNK. Interacts with GARRE1. Interacts with GRB2; this interaction is important for the formation of a ternary complex containing GRB2, AGO2 and DICER1. In terms of assembly, (Microbial infection) Interacts with Epstein-Barr virus (EBV) tegument protein BGLF2; this interaction participates in the regulation of cellular miRNA by the virus, leading to enhanced SUMOylation. (Microbial infection) Interacts with rotavirus A non-structural protein 5; this interaction probably plays a role in the sequestration of AGO2 in viral factories. As to quaternary structure, (Microbial infection) Interacts with human herpesvirus 8 protein MTA/ORF57; this interaction inhibits P-body formation. Mg(2+) is required as a cofactor. Mn(2+) serves as cofactor. Post-translationally, hydroxylated. 4-hydroxylation appears to enhance protein stability but is not required for miRNA-binding or endonuclease activity. Ubiquitinated on surface-exposed lysines by a SCF-like E3 ubiquitin-protein ligase complex containing ZSWIM8 during target-directed microRNA degradation (TDMD), a process that mediates degradation of microRNAs (miRNAs). Ubiquitination by the SCF-like E3 ubiquitin-protein ligase complex containing ZSWIM8 leads to its subsequent degradation, thereby exposing miRNAs for degradation. ZSWIM8 recognizes and binds AGO2 when it is engaged with a TDMD target. In terms of processing, phosphorylated. A phosphorylation cycle of C-terminal serine cluster (Ser-824-Ser-834) regulates the release of target mRNAs. Target-binding leads to phosphorylation of these residues by CSNK1A1, which reduces the affinity of AGO2 for mRNA and enables target release. The ANKRD52-PPP6C phosphatase complex dephosphorylates the residues, which primes AGO2 for binding a new target. Post-translationally, phosphorylation at Ser-387 by AKT3; leads to up-regulate translational repression of microRNA target and down-regulate endonucleolytic cleavage.

It localises to the cytoplasm. The protein localises to the P-body. Its subcellular location is the nucleus. The enzyme catalyses Endonucleolytic cleavage to 5'-phosphomonoester.. Inhibited by EDTA. Its function is as follows. Required for RNA-mediated gene silencing (RNAi) by the RNA-induced silencing complex (RISC). The 'minimal RISC' appears to include AGO2 bound to a short guide RNA such as a microRNA (miRNA) or short interfering RNA (siRNA). These guide RNAs direct RISC to complementary mRNAs that are targets for RISC-mediated gene silencing. The precise mechanism of gene silencing depends on the degree of complementarity between the miRNA or siRNA and its target. Binding of RISC to a perfectly complementary mRNA generally results in silencing due to endonucleolytic cleavage of the mRNA specifically by AGO2. Binding of RISC to a partially complementary mRNA results in silencing through inhibition of translation, and this is independent of endonuclease activity. May inhibit translation initiation by binding to the 7-methylguanosine cap, thereby preventing the recruitment of the translation initiation factor eIF4-E. May also inhibit translation initiation via interaction with EIF6, which itself binds to the 60S ribosomal subunit and prevents its association with the 40S ribosomal subunit. The inhibition of translational initiation leads to the accumulation of the affected mRNA in cytoplasmic processing bodies (P-bodies), where mRNA degradation may subsequently occur. In some cases RISC-mediated translational repression is also observed for miRNAs that perfectly match the 3' untranslated region (3'-UTR). Can also up-regulate the translation of specific mRNAs under certain growth conditions. Binds to the AU element of the 3'-UTR of the TNF (TNF-alpha) mRNA and up-regulates translation under conditions of serum starvation. Also required for transcriptional gene silencing (TGS), in which short RNAs known as antigene RNAs or agRNAs direct the transcriptional repression of complementary promoter regions. Functionally, (Microbial infection) Upon Sars-CoV-2 infection, associates with viral miRNA-like small RNA, CoV2-miR-O7a, and may repress mRNAs, such as BATF2, to evade the IFN response. The sequence is that of Protein argonaute-2 from Homo sapiens (Human).